Reading from the N-terminus, the 231-residue chain is Enolase-phosphatase E1 (231 aa).

The protein belongs to the HAD-like hydrolase superfamily. MasA/MtnC family. Monomer. It depends on Mg(2+) as a cofactor.

It catalyses the reaction 5-methylsulfanyl-2,3-dioxopentyl phosphate + H2O = 1,2-dihydroxy-5-(methylsulfanyl)pent-1-en-3-one + phosphate. Its pathway is amino-acid biosynthesis; L-methionine biosynthesis via salvage pathway; L-methionine from S-methyl-5-thio-alpha-D-ribose 1-phosphate: step 3/6. It participates in amino-acid biosynthesis; L-methionine biosynthesis via salvage pathway; L-methionine from S-methyl-5-thio-alpha-D-ribose 1-phosphate: step 4/6. Its function is as follows. Bifunctional enzyme that catalyzes the enolization of 2,3-diketo-5-methylthiopentyl-1-phosphate (DK-MTP-1-P) into the intermediate 2-hydroxy-3-keto-5-methylthiopentenyl-1-phosphate (HK-MTPenyl-1-P), which is then dephosphorylated to form the acireductone 1,2-dihydroxy-3-keto-5-methylthiopentene (DHK-MTPene). The sequence is that of Enolase-phosphatase E1 from Stenotrophomonas maltophilia (strain R551-3).